Here is a 318-residue protein sequence, read N- to C-terminus: Curved DNA-binding protein (318 aa).

Positions 5–69 (DYYKILGVEP…QKRAEFDEIR (65 aa)) constitute a J domain. Residues 111-130 (GGGNPFGGARQQQRSAGRRG) form a disordered region.

It localises to the cytoplasm. The protein resides in the nucleoid. DNA-binding protein that preferentially recognizes a curved DNA sequence. It is probably a functional analog of DnaJ; displays overlapping activities with DnaJ, but functions under different conditions, probably acting as a molecular chaperone in an adaptive response to environmental stresses other than heat shock. Lacks autonomous chaperone activity; binds native substrates and targets them for recognition by DnaK. Its activity is inhibited by the binding of CbpM. The polypeptide is Curved DNA-binding protein (Pseudomonas putida (strain GB-1)).